Consider the following 704-residue polypeptide: Elongation factor G (704 aa).

In terms of domain architecture, tr-type G spans 10–290 (KKVRNIGIMA…AVVDYLPSPL (281 aa)). Residues 19 to 26 (AHIDAGKT), 83 to 87 (DTPGH), and 137 to 140 (NKMD) each bind GTP.

Belongs to the TRAFAC class translation factor GTPase superfamily. Classic translation factor GTPase family. EF-G/EF-2 subfamily.

It localises to the cytoplasm. Its function is as follows. Catalyzes the GTP-dependent ribosomal translocation step during translation elongation. During this step, the ribosome changes from the pre-translocational (PRE) to the post-translocational (POST) state as the newly formed A-site-bound peptidyl-tRNA and P-site-bound deacylated tRNA move to the P and E sites, respectively. Catalyzes the coordinated movement of the two tRNA molecules, the mRNA and conformational changes in the ribosome. The protein is Elongation factor G of Kocuria rhizophila (strain ATCC 9341 / DSM 348 / NBRC 103217 / DC2201).